We begin with the raw amino-acid sequence, 182 residues long: Peptidyl-prolyl cis-trans isomerase C, mitochondrial (182 aa).

The N-terminal 20 residues, 1 to 20, are a transit peptide targeting the mitochondrion; sequence MFKRSIIQQSRLFSNSASRL. The region spanning 25–181 is the PPIase cyclophilin-type domain; the sequence is FFDPAVNGTK…AEIVIEEAGE (157 aa).

This sequence belongs to the cyclophilin-type PPIase family.

The protein resides in the mitochondrion matrix. It catalyses the reaction [protein]-peptidylproline (omega=180) = [protein]-peptidylproline (omega=0). Its activity is regulated as follows. Inhibited by the immunosuppressant drug cyclosporin A and by SDZ NIM811, a PPIase inhibitor. Functionally, PPIases accelerate the folding of proteins. It catalyzes the cis-trans isomerization of proline imidic peptide bonds in oligopeptides. This isozyme is required for growth on lactate at high temperature. This chain is Peptidyl-prolyl cis-trans isomerase C, mitochondrial (CPR3), found in Saccharomyces cerevisiae (strain ATCC 204508 / S288c) (Baker's yeast).